A 169-amino-acid polypeptide reads, in one-letter code: Cell division inhibitor SulA (169 aa).

The span at 1–15 (MFTSAHANRSAQASA) shows a compositional bias: polar residues. Positions 1–22 (MFTSAHANRSAQASASAGHYAH) are disordered. Residues 106 to 112 (ALRTGNY) are ftsZ binding. A lon protease binding region spans residues 162 to 169 (KIHSNLYH).

It belongs to the SulA family. As to quaternary structure, interacts with FtsZ. In terms of processing, is rapidly cleaved and degraded by the Lon protease once DNA damage is repaired.

Its function is as follows. Component of the SOS system and an inhibitor of cell division. Accumulation of SulA causes rapid cessation of cell division and the appearance of long, non-septate filaments. In the presence of GTP, binds a polymerization-competent form of FtsZ in a 1:1 ratio, thus inhibiting FtsZ polymerization and therefore preventing it from participating in the assembly of the Z ring. This mechanism prevents the premature segregation of damaged DNA to daughter cells during cell division. The chain is Cell division inhibitor SulA from Klebsiella pneumoniae (strain 342).